The sequence spans 187 residues: Large ribosomal subunit protein bL25 (187 aa).

It belongs to the bacterial ribosomal protein bL25 family. CTC subfamily. In terms of assembly, part of the 50S ribosomal subunit; part of the 5S rRNA/L5/L18/L25 subcomplex. Contacts the 5S rRNA. Binds to the 5S rRNA independently of L5 and L18.

This is one of the proteins that binds to the 5S RNA in the ribosome where it forms part of the central protuberance. The protein is Large ribosomal subunit protein bL25 of Tropheryma whipplei (strain Twist) (Whipple's bacillus).